A 501-amino-acid chain; its full sequence is Putative BTB/POZ domain-containing protein L107 (501 aa).

A BTB domain is found at 16 to 87; that stretch reads TDLELTLVDS…FYITDIERSQ (72 aa).

It belongs to the mimivirus BTB/WD family.

The protein is Putative BTB/POZ domain-containing protein L107 of Acanthamoeba polyphaga mimivirus (APMV).